The sequence spans 347 residues: Protein RecA (347 aa).

67 to 74 contributes to the ATP binding site; that stretch reads GPESSGKT.

The protein belongs to the RecA family.

Its subcellular location is the cytoplasm. Functionally, can catalyze the hydrolysis of ATP in the presence of single-stranded DNA, the ATP-dependent uptake of single-stranded DNA by duplex DNA, and the ATP-dependent hybridization of homologous single-stranded DNAs. It interacts with LexA causing its activation and leading to its autocatalytic cleavage. The polypeptide is Protein RecA (Helicobacter acinonychis (strain Sheeba)).